The following is a 257-amino-acid chain: 1-(5-phosphoribosyl)-5-[(5-phosphoribosylamino)methylideneamino] imidazole-4-carboxamide isomerase (257 aa).

Asp8 acts as the Proton acceptor in catalysis. Asp129 (proton donor) is an active-site residue.

This sequence belongs to the HisA/HisF family.

The protein resides in the cytoplasm. It carries out the reaction 1-(5-phospho-beta-D-ribosyl)-5-[(5-phospho-beta-D-ribosylamino)methylideneamino]imidazole-4-carboxamide = 5-[(5-phospho-1-deoxy-D-ribulos-1-ylimino)methylamino]-1-(5-phospho-beta-D-ribosyl)imidazole-4-carboxamide. It functions in the pathway amino-acid biosynthesis; L-histidine biosynthesis; L-histidine from 5-phospho-alpha-D-ribose 1-diphosphate: step 4/9. This is 1-(5-phosphoribosyl)-5-[(5-phosphoribosylamino)methylideneamino] imidazole-4-carboxamide isomerase from Gloeothece citriformis (strain PCC 7424) (Cyanothece sp. (strain PCC 7424)).